The chain runs to 120 residues: Glycine cleavage system H protein (120 aa).

The Lipoyl-binding domain occupies 20–102; it reads DGTVGISDHA…YEGGWLFKLD (83 aa). The residue at position 61 (lysine 61) is an N6-lipoyllysine.

It belongs to the GcvH family. The glycine cleavage system is composed of four proteins: P, T, L and H. Requires (R)-lipoate as cofactor.

Functionally, the glycine cleavage system catalyzes the degradation of glycine. The H protein shuttles the methylamine group of glycine from the P protein to the T protein. The protein is Glycine cleavage system H protein of Deinococcus radiodurans (strain ATCC 13939 / DSM 20539 / JCM 16871 / CCUG 27074 / LMG 4051 / NBRC 15346 / NCIMB 9279 / VKM B-1422 / R1).